A 344-amino-acid chain; its full sequence is AA9 family lytic polysaccharide monooxygenase J (344 aa).

The signal sequence occupies residues 1 to 20 (MKSSLLVVLTAGLAVRDAIA). Residues H21 and H99 each coordinate Cu(2+). C58 and C194 form a disulfide bridge. O2 is bound by residues H180 and Q189. Residue Y191 participates in Cu(2+) binding. A disordered region spans residues 272–301 (PGGKPASGGSDGNAPEVAEPSGGEGSPSAP). Residues 285 to 301 (APEVAEPSGGEGSPSAP) show a composition bias toward low complexity. In terms of domain architecture, CBM1 spans 304 to 341 (CEVAAYGQCGGDQYSGCTQCASGYTCKAVSPPYYSQCA).

The protein belongs to the polysaccharide monooxygenase AA9 family. Cu(2+) serves as cofactor.

Its subcellular location is the secreted. It catalyses the reaction [(1-&gt;4)-beta-D-glucosyl]n+m + reduced acceptor + O2 = 4-dehydro-beta-D-glucosyl-[(1-&gt;4)-beta-D-glucosyl]n-1 + [(1-&gt;4)-beta-D-glucosyl]m + acceptor + H2O.. In terms of biological role, lytic polysaccharide monooxygenase (LPMO) that depolymerizes crystalline and amorphous polysaccharides via the oxidation of scissile alpha- or beta-(1-4)-glycosidic bonds, yielding C4 oxidation products. Catalysis by LPMOs requires the reduction of the active-site copper from Cu(II) to Cu(I) by a reducing agent and H(2)O(2) or O(2) as a cosubstrate. The polypeptide is AA9 family lytic polysaccharide monooxygenase J (gh61-10) (Neurospora crassa (strain ATCC 24698 / 74-OR23-1A / CBS 708.71 / DSM 1257 / FGSC 987)).